We begin with the raw amino-acid sequence, 283 residues long: NFU1 iron-sulfur cluster scaffold homolog, mitochondrial (283 aa).

The transit peptide at 1–65 (MSKFLSQAAI…ELRMPVACRR (65 aa)) directs the protein to the mitochondrion. Residues 182 to 250 (IKELLDTRIR…IPEVESVEQV (69 aa)) form a nifU region. Cysteine 219 and cysteine 222 together coordinate [4Fe-4S] cluster.

Belongs to the NifU family.

It is found in the mitochondrion. Molecular scaffold for [Fe-S] cluster assembly of mitochondrial iron-sulfur proteins. The sequence is that of NFU1 iron-sulfur cluster scaffold homolog, mitochondrial from Drosophila sechellia (Fruit fly).